The following is a 161-amino-acid chain: Large ribosomal subunit protein uL15 (161 aa).

The span at 1–10 (MKLNELRDNP) shows a compositional bias: basic and acidic residues. The disordered stretch occupies residues 1 to 42 (MKLNELRDNPGARPKSKRLGRGIGSGKGKTSGKGVKGQKARE). The segment covering 21–35 (RGIGSGKGKTSGKGV) has biased composition (gly residues).

The protein belongs to the universal ribosomal protein uL15 family. As to quaternary structure, part of the 50S ribosomal subunit.

Functionally, binds to the 23S rRNA. The protein is Large ribosomal subunit protein uL15 of Acidiphilium cryptum (strain JF-5).